The primary structure comprises 92 residues: Small ribosomal subunit protein uS19c (92 aa).

It belongs to the universal ribosomal protein uS19 family.

It localises to the plastid. Its subcellular location is the chloroplast. Its function is as follows. Protein S19 forms a complex with S13 that binds strongly to the 16S ribosomal RNA. The chain is Small ribosomal subunit protein uS19c from Coffea arabica (Arabian coffee).